A 133-amino-acid chain; its full sequence is Small ribosomal subunit protein bS6 (133 aa).

This sequence belongs to the bacterial ribosomal protein bS6 family.

Its function is as follows. Binds together with bS18 to 16S ribosomal RNA. This Chlorobium limicola (strain DSM 245 / NBRC 103803 / 6330) protein is Small ribosomal subunit protein bS6.